Consider the following 160-residue polypeptide: Phosphopantetheine adenylyltransferase (160 aa).

Serine 9 provides a ligand contact to substrate. ATP is bound by residues 9-10 and histidine 17; that span reads SF. Substrate-binding residues include lysine 41, leucine 73, and lysine 87. ATP is bound by residues 88–90, glutamate 98, and 123–129; these read GLR and YSYLSSS.

It belongs to the bacterial CoaD family. As to quaternary structure, homohexamer. Mg(2+) is required as a cofactor.

The protein localises to the cytoplasm. The enzyme catalyses (R)-4'-phosphopantetheine + ATP + H(+) = 3'-dephospho-CoA + diphosphate. It functions in the pathway cofactor biosynthesis; coenzyme A biosynthesis; CoA from (R)-pantothenate: step 4/5. Functionally, reversibly transfers an adenylyl group from ATP to 4'-phosphopantetheine, yielding dephospho-CoA (dPCoA) and pyrophosphate. The chain is Phosphopantetheine adenylyltransferase from Clostridium tetani (strain Massachusetts / E88).